A 176-amino-acid polypeptide reads, in one-letter code: MDLSEPIHDFLLVFLGSGLILGGLGVVLLPNPIYSAFSLGLVLVCTSLFYILSNSYFVAAAQLLIYVGAINVLIIFAVMFMNGSEYYKDFHLWTVGNGITSMVCISLFISLITTISDTSWYGIIWTTRSNQIIEQDFLSNSQQIGIHLSTDFFLPFELISIILLVALIGAIAVARQ.

5 helical membrane passes run 10 to 30 (FLLVFLGSGLILGGLGVVLLP), 32 to 52 (PIYSAFSLGLVLVCTSLFYIL), 61 to 81 (AQLLIYVGAINVLIIFAVMFM), 92 to 112 (LWTVGNGITSMVCISLFISLI), and 152 to 172 (FFLPFELISIILLVALIGAIA).

This sequence belongs to the complex I subunit 6 family. NDH is composed of at least 16 different subunits, 5 of which are encoded in the nucleus.

It is found in the plastid. It localises to the chloroplast thylakoid membrane. The enzyme catalyses a plastoquinone + NADH + (n+1) H(+)(in) = a plastoquinol + NAD(+) + n H(+)(out). The catalysed reaction is a plastoquinone + NADPH + (n+1) H(+)(in) = a plastoquinol + NADP(+) + n H(+)(out). Its function is as follows. NDH shuttles electrons from NAD(P)H:plastoquinone, via FMN and iron-sulfur (Fe-S) centers, to quinones in the photosynthetic chain and possibly in a chloroplast respiratory chain. The immediate electron acceptor for the enzyme in this species is believed to be plastoquinone. Couples the redox reaction to proton translocation, and thus conserves the redox energy in a proton gradient. This chain is NAD(P)H-quinone oxidoreductase subunit 6, chloroplastic (ndhG), found in Solanum bulbocastanum (Wild potato).